Consider the following 295-residue polypeptide: 4-hydroxy-tetrahydrodipicolinate synthase (295 aa).

A pyruvate-binding site is contributed by Thr-47. Tyr-135 serves as the catalytic Proton donor/acceptor. The active-site Schiff-base intermediate with substrate is the Lys-163. A pyruvate-binding site is contributed by Ile-204.

It belongs to the DapA family. Homotetramer; dimer of dimers.

The protein localises to the cytoplasm. The enzyme catalyses L-aspartate 4-semialdehyde + pyruvate = (2S,4S)-4-hydroxy-2,3,4,5-tetrahydrodipicolinate + H2O + H(+). It participates in amino-acid biosynthesis; L-lysine biosynthesis via DAP pathway; (S)-tetrahydrodipicolinate from L-aspartate: step 3/4. In terms of biological role, catalyzes the condensation of (S)-aspartate-beta-semialdehyde [(S)-ASA] and pyruvate to 4-hydroxy-tetrahydrodipicolinate (HTPA). This is 4-hydroxy-tetrahydrodipicolinate synthase from Caldicellulosiruptor saccharolyticus (strain ATCC 43494 / DSM 8903 / Tp8T 6331).